A 93-amino-acid chain; its full sequence is Large ribosomal subunit protein eL42 (93 aa).

Zn(2+) contacts are provided by C11, C14, C71, and C74. Residues 11-74 (CRYCGKHTLH…VNIRFRCTEC (64 aa)) form a C4-type zinc finger.

The protein belongs to the eukaryotic ribosomal protein eL42 family. Part of the 50S ribosomal subunit. It depends on Zn(2+) as a cofactor.

Functionally, binds to the 23S rRNA. This Archaeoglobus fulgidus (strain ATCC 49558 / DSM 4304 / JCM 9628 / NBRC 100126 / VC-16) protein is Large ribosomal subunit protein eL42.